Here is a 340-residue protein sequence, read N- to C-terminus: Anthranilate phosphoribosyltransferase (340 aa).

Residues Gly-79, 82–83 (GD), Ser-87, 89–92 (NIST), 107–115 (KHGNRSVSS), and Ser-119 each bind 5-phospho-alpha-D-ribose 1-diphosphate. Residue Gly-79 participates in anthranilate binding. Residue Ser-91 participates in Mg(2+) binding. An anthranilate-binding site is contributed by Asn-110. Arg-165 provides a ligand contact to anthranilate. Asp-224 and Glu-225 together coordinate Mg(2+).

This sequence belongs to the anthranilate phosphoribosyltransferase family. As to quaternary structure, homodimer. Requires Mg(2+) as cofactor.

The catalysed reaction is N-(5-phospho-beta-D-ribosyl)anthranilate + diphosphate = 5-phospho-alpha-D-ribose 1-diphosphate + anthranilate. It participates in amino-acid biosynthesis; L-tryptophan biosynthesis; L-tryptophan from chorismate: step 2/5. Its function is as follows. Catalyzes the transfer of the phosphoribosyl group of 5-phosphorylribose-1-pyrophosphate (PRPP) to anthranilate to yield N-(5'-phosphoribosyl)-anthranilate (PRA). The protein is Anthranilate phosphoribosyltransferase of Oceanobacillus iheyensis (strain DSM 14371 / CIP 107618 / JCM 11309 / KCTC 3954 / HTE831).